The following is a 432-amino-acid chain: Golgin subfamily A member 6-like protein 9 (432 aa).

Over residues 1–11 (MWPQPRLPPHP) the composition is skewed to pro residues. Disordered stretches follow at residues 1–77 (MWPQ…YGEG) and 349–411 (KELE…AGGA). Residues 51-62 (NGSSPDTFTSGG) are compositionally biased toward polar residues. Residues 157–354 (SKMEQLQDET…EQQVKELEKS (198 aa)) are a coiled coil. Positions 349-362 (KELEKSGGAEEPRG) are enriched in basic and acidic residues. The span at 366 to 381 (AAAARPVAGAPVPQGA) shows a compositional bias: low complexity.

This sequence belongs to the GOLGA6 family.

The polypeptide is Golgin subfamily A member 6-like protein 9 (Homo sapiens (Human)).